Here is a 645-residue protein sequence, read N- to C-terminus: Threonine--tRNA ligase (645 aa).

In terms of domain architecture, TGS spans 1-62; that stretch reads MSIHITFPDG…VEDGSLEIVT (62 aa). The interval 242 to 541 is catalytic; that stretch reads DHRKLGKELD…LTEVYKGAFP (300 aa). The Zn(2+) site is built by Cys336, His387, and His518.

The protein belongs to the class-II aminoacyl-tRNA synthetase family. Homodimer. It depends on Zn(2+) as a cofactor.

The protein resides in the cytoplasm. It catalyses the reaction tRNA(Thr) + L-threonine + ATP = L-threonyl-tRNA(Thr) + AMP + diphosphate + H(+). Its function is as follows. Catalyzes the attachment of threonine to tRNA(Thr) in a two-step reaction: L-threonine is first activated by ATP to form Thr-AMP and then transferred to the acceptor end of tRNA(Thr). Also edits incorrectly charged L-seryl-tRNA(Thr). This chain is Threonine--tRNA ligase, found in Enterococcus faecalis (strain ATCC 700802 / V583).